The following is a 419-amino-acid chain: Metacaspase-1A (419 aa).

Residues 1–89 form a disordered region; the sequence is MHHQQSSYGG…PPDQPVSFGQ (89 aa). The span at 41 to 51 shows a compositional bias: polar residues; sequence NGYNSPQQNYG. Over residues 59–71 the composition is skewed to low complexity; sequence YQQQSAYQNSYNQ. Catalysis depends on residues His-190 and Cys-246.

The protein belongs to the peptidase C14B family.

In terms of biological role, involved in cell death (apoptosis). The polypeptide is Metacaspase-1A (casA) (Aspergillus oryzae (strain ATCC 42149 / RIB 40) (Yellow koji mold)).